Here is a 293-residue protein sequence, read N- to C-terminus: 4-diphosphocytidyl-2-C-methyl-D-erythritol kinase (293 aa).

Lys-16 is an active-site residue. Pro-99–Ser-109 contacts ATP. Residue Asp-141 is part of the active site.

Belongs to the GHMP kinase family. IspE subfamily.

It catalyses the reaction 4-CDP-2-C-methyl-D-erythritol + ATP = 4-CDP-2-C-methyl-D-erythritol 2-phosphate + ADP + H(+). It participates in isoprenoid biosynthesis; isopentenyl diphosphate biosynthesis via DXP pathway; isopentenyl diphosphate from 1-deoxy-D-xylulose 5-phosphate: step 3/6. Functionally, catalyzes the phosphorylation of the position 2 hydroxy group of 4-diphosphocytidyl-2C-methyl-D-erythritol. This chain is 4-diphosphocytidyl-2-C-methyl-D-erythritol kinase, found in Burkholderia thailandensis (strain ATCC 700388 / DSM 13276 / CCUG 48851 / CIP 106301 / E264).